The sequence spans 101 residues: Signal recognition particle 19 kDa protein (101 aa).

The protein belongs to the SRP19 family. In terms of assembly, part of the signal recognition particle protein translocation system, which is composed of SRP and FtsY. Archaeal SRP consists of a 7S RNA molecule of 300 nucleotides and two protein subunits: SRP54 and SRP19.

It is found in the cytoplasm. Functionally, involved in targeting and insertion of nascent membrane proteins into the cytoplasmic membrane. Binds directly to 7S RNA and mediates binding of the 54 kDa subunit of the SRP. In Methanosarcina acetivorans (strain ATCC 35395 / DSM 2834 / JCM 12185 / C2A), this protein is Signal recognition particle 19 kDa protein.